The chain runs to 382 residues: Lipid-A-disaccharide synthase (382 aa).

Belongs to the LpxB family.

It catalyses the reaction 2-N,3-O-bis[(3R)-3-hydroxytetradecanoyl]-alpha-D-glucosaminyl 1-phosphate + UDP-2-N,3-O-bis[(3R)-3-hydroxytetradecanoyl]-alpha-D-glucosamine = lipid A disaccharide (E. coli) + UDP + H(+). The enzyme catalyses a lipid X + a UDP-2-N,3-O-bis[(3R)-3-hydroxyacyl]-alpha-D-glucosamine = a lipid A disaccharide + UDP + H(+). Its pathway is glycolipid biosynthesis; lipid IV(A) biosynthesis; lipid IV(A) from (3R)-3-hydroxytetradecanoyl-[acyl-carrier-protein] and UDP-N-acetyl-alpha-D-glucosamine: step 5/6. Condensation of UDP-2,3-diacylglucosamine and 2,3-diacylglucosamine-1-phosphate to form lipid A disaccharide, a precursor of lipid A, a phosphorylated glycolipid that anchors the lipopolysaccharide to the outer membrane of the cell. The polypeptide is Lipid-A-disaccharide synthase (Escherichia coli (strain K12 / MC4100 / BW2952)).